Here is a 151-residue protein sequence, read N- to C-terminus: Small ribosomal subunit protein uS19 (151 aa).

The segment at 1-23 (MVVNKQGSVKSIKRKARKSRKVT) is disordered. Basic residues predominate over residues 11–23 (SIKRKARKSRKVT).

It belongs to the universal ribosomal protein uS19 family.

Protein S19 forms a complex with S13 that binds strongly to the 16S ribosomal RNA. In Thermoplasma volcanium (strain ATCC 51530 / DSM 4299 / JCM 9571 / NBRC 15438 / GSS1), this protein is Small ribosomal subunit protein uS19 (rps19).